We begin with the raw amino-acid sequence, 503 residues long: Palmitoleoyl-protein carboxylesterase NOTUM (503 aa).

Residues 1 to 19 (MGGEVRVLLLLGLLHWVGG) form the signal peptide. Positions 23 to 53 (RKTWRRRGQQPPQPPPPPPLPQRAEVEPGAG) are disordered. Residues 33-43 (PPQPPPPPPLP) are compositionally biased toward pro residues. Ser-88 is subject to Phosphoserine. A glycan (N-linked (GlcNAc...) asparagine) is linked at Asn-103. Catalysis depends on charge relay system residues Ser-239, Asp-347, and His-396.

The protein belongs to the pectinacetylesterase family. Notum subfamily. As to expression, widely expressed. Expressed in lung, ovary, kidney, liver and brain. Not detected in thymus, heart, spleen, stomach, skeletal muscle and bone marrow.

The protein resides in the secreted. The catalysed reaction is [Wnt protein]-O-(9Z)-hexadecenoyl-L-serine + H2O = [Wnt protein]-L-serine + (9Z)-hexadecenoate + H(+). In terms of biological role, carboxylesterase that acts as a key negative regulator of the Wnt signaling pathway by specifically mediating depalmitoleoylation of WNT proteins. Serine palmitoleoylation of WNT proteins is required for efficient binding to frizzled receptors. In Mus musculus (Mouse), this protein is Palmitoleoyl-protein carboxylesterase NOTUM.